Here is a 529-residue protein sequence, read N- to C-terminus: MSNSPFQQEVAKRRTFAIISHPDAGKTTITEKVLLFGQAIQKAGTVKGRGSNQHAKSDWMEMEKQRGISITTSVMQFPYQDCLVNLLDTPGHEDFSEDTYRTLTAVDCCLMVIDAAKGVEERTRKLMEVTRLRDTPILTFMNKLDRDIRDPMELMDEVENELNIACCPITWPIGCGKSFKGVYHLYLDETYLYQTGKGHTIQEVRAIKGLNNPELDAAIGEDLAEQLRQELELVQGASHEFDHQAFLQGELTPVFFGTALGNFGVNHMLDGLVKWAPAPMPRQTDVREVSAQEDKFTGFIFKIQANMDPKHRDRVAFLRVVSGQYEKGMKLHQVRIKKDVVIADALTFMAGDRSHVDHAYPGDIIGLHNHGTIQIGDTFTQGEDLKFTGIPNFAPELFRRIRLRDPLKQKQLLKGLVQLSEEGAVQVFRPLANNDLIVGAVGILQFDVVVARLKSEYNVEALYEPVNVSTARWVECHDAKKLEEFKRKSEQNLALDGGDNLTYIAPTMVNLNLTRERYPDINFRKTREH.

Residues 11 to 280 form the tr-type G domain; it reads AKRRTFAIIS…GLVKWAPAPM (270 aa). GTP is bound by residues 20-27, 88-92, and 142-145; these read SHPDAGKT, DTPGH, and NKLD.

The protein belongs to the TRAFAC class translation factor GTPase superfamily. Classic translation factor GTPase family. PrfC subfamily.

The protein localises to the cytoplasm. Increases the formation of ribosomal termination complexes and stimulates activities of RF-1 and RF-2. It binds guanine nucleotides and has strong preference for UGA stop codons. It may interact directly with the ribosome. The stimulation of RF-1 and RF-2 is significantly reduced by GTP and GDP, but not by GMP. In Photorhabdus laumondii subsp. laumondii (strain DSM 15139 / CIP 105565 / TT01) (Photorhabdus luminescens subsp. laumondii), this protein is Peptide chain release factor 3.